The sequence spans 153 residues: Ribosomal RNA large subunit methyltransferase H (153 aa).

S-adenosyl-L-methionine-binding positions include Ile-75, Gly-103, and 121 to 126 (LSAMTF).

This sequence belongs to the RNA methyltransferase RlmH family. In terms of assembly, homodimer.

The protein resides in the cytoplasm. The catalysed reaction is pseudouridine(1915) in 23S rRNA + S-adenosyl-L-methionine = N(3)-methylpseudouridine(1915) in 23S rRNA + S-adenosyl-L-homocysteine + H(+). Specifically methylates the pseudouridine at position 1915 (m3Psi1915) in 23S rRNA. The protein is Ribosomal RNA large subunit methyltransferase H of Helicobacter hepaticus (strain ATCC 51449 / 3B1).